Here is a 339-residue protein sequence, read N- to C-terminus: Ketol-acid reductoisomerase (NADP(+)) (339 aa).

A KARI N-terminal Rossmann domain is found at 1 to 182; it reads MRVYYDRDAD…GGGRAGIIET (182 aa). Residues 24–27, Arg48, Ser51, Thr53, and 83–86 contribute to the NADP(+) site; these read YGSQ and DELQ. Residue His108 is part of the active site. Residue Gly134 coordinates NADP(+). One can recognise a KARI C-terminal knotted domain in the interval 183 to 328; it reads TFKEECETDL…AKLRGMMPWI (146 aa). Mg(2+) contacts are provided by Asp191, Glu195, Glu227, and Glu231. Substrate is bound at residue Ser252.

Belongs to the ketol-acid reductoisomerase family. Mg(2+) is required as a cofactor.

The catalysed reaction is (2R)-2,3-dihydroxy-3-methylbutanoate + NADP(+) = (2S)-2-acetolactate + NADPH + H(+). It carries out the reaction (2R,3R)-2,3-dihydroxy-3-methylpentanoate + NADP(+) = (S)-2-ethyl-2-hydroxy-3-oxobutanoate + NADPH + H(+). Its pathway is amino-acid biosynthesis; L-isoleucine biosynthesis; L-isoleucine from 2-oxobutanoate: step 2/4. It participates in amino-acid biosynthesis; L-valine biosynthesis; L-valine from pyruvate: step 2/4. Its function is as follows. Involved in the biosynthesis of branched-chain amino acids (BCAA). Catalyzes an alkyl-migration followed by a ketol-acid reduction of (S)-2-acetolactate (S2AL) to yield (R)-2,3-dihydroxy-isovalerate. In the isomerase reaction, S2AL is rearranged via a Mg-dependent methyl migration to produce 3-hydroxy-3-methyl-2-ketobutyrate (HMKB). In the reductase reaction, this 2-ketoacid undergoes a metal-dependent reduction by NADPH to yield (R)-2,3-dihydroxy-isovalerate. The sequence is that of Ketol-acid reductoisomerase (NADP(+)) from Methylobacterium radiotolerans (strain ATCC 27329 / DSM 1819 / JCM 2831 / NBRC 15690 / NCIMB 10815 / 0-1).